Consider the following 288-residue polypeptide: MSSLREEELINILPKDGPTVEEVKKYLEKYNDEFIIIKCGGSVLVDPKLFKVFIEDVVVLKKLGFNPIIVHGGGKRINSKLLEVNIKSNFINGLRVTDKDTINIVEDVLIEFNKEIVEALNELDCKAKRITSKENNIITVVQENKDLGFVGRPTGINKEFLTEIIKANKVPVIAPLGLDKDNQTFNINADTTAGSIAIELKARRLMIISDVEGVLDSEKKLIPEINSKKANELIDQEVISGGMIPKIKNCLDVASNGVKAVVIIDGRKNHSLLFELLSDKGSGTLIRE.

Substrate is bound by residues 73-74 (GG), Arg-95, and Asn-186.

The protein belongs to the acetylglutamate kinase family. ArgB subfamily.

The protein resides in the cytoplasm. The enzyme catalyses N-acetyl-L-glutamate + ATP = N-acetyl-L-glutamyl 5-phosphate + ADP. The protein operates within amino-acid biosynthesis; L-arginine biosynthesis; N(2)-acetyl-L-ornithine from L-glutamate: step 2/4. Its function is as follows. Catalyzes the ATP-dependent phosphorylation of N-acetyl-L-glutamate. In Pelagibacter ubique (strain HTCC1062), this protein is Acetylglutamate kinase.